We begin with the raw amino-acid sequence, 602 residues long: Multiple epidermal growth factor-like domains protein 9 (602 aa).

The N-terminal stretch at 1-30 (MNGGAERAMRSLPSLGGLALLCCAAAAAAA) is a signal peptide. Over 31 to 514 (AVASAASAGN…LADVSWTQFN (484 aa)) the chain is Extracellular. Positions 38–199 (AGNVTGGGGA…PATEAPSSPP (162 aa)) are disordered. N-linked (GlcNAc...) asparagine glycosylation is present at N40. Composition is skewed to low complexity over residues 68-85 (PRATAPTAQAPRTGPPRA) and 139-166 (APTRPAPTTLSTTTGPAPTTPVATTVPA). Pro residues predominate over residues 167–176 (PTTPRTPTPD). N182 is a glycosylation site (N-linked (GlcNAc...) asparagine). Pro residues predominate over residues 187 to 199 (PTPPATEAPSSPP). Cystine bridges form between C204-C217, C206-C224, C226-C235, C238-C251, C254-C266, C256-C272, C274-C283, C286-C298, C301-C310, C303-C317, C320-C329, C332-C346, C349-C360, C351-C371, C374-C383, C386-C397, C400-C415, C402-C422, C425-C434, and C437-C449. 5 Laminin EGF-like domains span residues 204-253 (CNCS…LCQP), 254-300 (CDCS…GCLP), 301-348 (CQCN…ECLR), 349-399 (CPCS…ICRK), and 400-451 (CQCH…NCIK). N-linked (GlcNAc...) asparagine glycosylation is found at N205 and N218. An N-linked (GlcNAc...) asparagine glycan is attached at N245. Residue N267 is glycosylated (N-linked (GlcNAc...) asparagine). N305 is a glycosylation site (N-linked (GlcNAc...) asparagine). N428 is a glycosylation site (N-linked (GlcNAc...) asparagine). 3 N-linked (GlcNAc...) asparagine glycosylation sites follow: N468, N481, and N500. The helical transmembrane segment at 515–535 (IIILTVIIIVVVLLMGFVGAV) threads the bilayer. At 536–602 (YMYREYQNRK…LTTPIHNYKA (67 aa)) the chain is on the cytoplasmic side.

The protein resides in the membrane. In Homo sapiens (Human), this protein is Multiple epidermal growth factor-like domains protein 9 (MEGF9).